The following is a 715-amino-acid chain: Polyribonucleotide nucleotidyltransferase (715 aa).

D490 and D496 together coordinate Mg(2+). Residues 557-616 (PRIETMTIPTDKIREVIGSGGKVIREIVETSGAKVDISDDGTIKIASANADSIKKAYDMI) enclose the KH domain. Residues 626–694 (GKIYVGKVVK…DRGKVRLGMK (69 aa)) form the S1 motif domain.

Belongs to the polyribonucleotide nucleotidyltransferase family. Mg(2+) is required as a cofactor.

Its subcellular location is the cytoplasm. It carries out the reaction RNA(n+1) + phosphate = RNA(n) + a ribonucleoside 5'-diphosphate. Its function is as follows. Involved in mRNA degradation. Catalyzes the phosphorolysis of single-stranded polyribonucleotides processively in the 3'- to 5'-direction. The protein is Polyribonucleotide nucleotidyltransferase of Paracoccus denitrificans (strain Pd 1222).